The following is a 666-amino-acid chain: Secreted protein ARB_01864 (666 aa).

A signal peptide spans 1–18 (MRFSTLVSLAAWAAAALA). Asn160, Asn216, Asn342, Asn405, Asn594, Asn600, and Asn662 each carry an N-linked (GlcNAc...) asparagine glycan. The disordered stretch occupies residues 323-353 (RGSMKPRGVPNPTRRAIKGNATTSTQPYQHP).

The protein localises to the secreted. The chain is Secreted protein ARB_01864 from Arthroderma benhamiae (strain ATCC MYA-4681 / CBS 112371) (Trichophyton mentagrophytes).